A 388-amino-acid chain; its full sequence is Leucine aminopeptidase 1 (388 aa).

The N-terminal stretch at 1-19 (MKSLSLLALAAIAPPAAVA) is a signal peptide. Positions 20-88 (AVVDRQVPFE…SAKSHERIQV (69 aa)) are excised as a propeptide. The N-linked (GlcNAc...) asparagine glycan is linked to asparagine 180. Residues histidine 188, aspartate 207, glutamate 246, and aspartate 273 each contribute to the Zn(2+) site. An intrachain disulfide couples cysteine 322 to cysteine 326. Position 355 (histidine 355) interacts with Zn(2+).

It belongs to the peptidase M28 family. M28E subfamily. As to quaternary structure, monomer. Zn(2+) serves as cofactor.

Its subcellular location is the secreted. Extracellular aminopeptidase that allows assimilation of proteinaceous substrates. This chain is Leucine aminopeptidase 1 (LAP1), found in Coccidioides posadasii (strain C735) (Valley fever fungus).